The chain runs to 545 residues: Probable bifunctional tRNA threonylcarbamoyladenosine biosynthesis protein (545 aa).

The kae1 stretch occupies residues 1–329; the sequence is MKNTFILGIE…YRTDDVKVTW (329 aa). Positions 113, 117, and 134 each coordinate Fe cation. Residues 134 to 138, Asp166, Gly179, Glu183, and Asn262 contribute to the L-threonylcarbamoyladenylate site; that span reads YVSGA. Asp290 lines the Fe cation pocket. Residues 340–545 enclose the Protein kinase domain; the sequence is EISPGTSLKL…EEIKKRARYA (206 aa). Residues 353–361 and Lys375 each bind ATP; that span reads LDNGAEAIV. Asp462 acts as the Proton acceptor; for kinase activity in catalysis.

In the N-terminal section; belongs to the KAE1 / TsaD family. This sequence in the C-terminal section; belongs to the protein kinase superfamily. Tyr protein kinase family. BUD32 subfamily. In terms of assembly, component of the KEOPS complex that consists of Kae1, Bud32, Cgi121 and Pcc1; the whole complex dimerizes. Fe(2+) serves as cofactor.

Its subcellular location is the cytoplasm. The catalysed reaction is L-seryl-[protein] + ATP = O-phospho-L-seryl-[protein] + ADP + H(+). It carries out the reaction L-threonyl-[protein] + ATP = O-phospho-L-threonyl-[protein] + ADP + H(+). It catalyses the reaction L-threonylcarbamoyladenylate + adenosine(37) in tRNA = N(6)-L-threonylcarbamoyladenosine(37) in tRNA + AMP + H(+). Functionally, required for the formation of a threonylcarbamoyl group on adenosine at position 37 (t(6)A37) in tRNAs that read codons beginning with adenine. Is a component of the KEOPS complex that is probably involved in the transfer of the threonylcarbamoyl moiety of threonylcarbamoyl-AMP (TC-AMP) to the N6 group of A37. The Kae1 domain likely plays a direct catalytic role in this reaction. The Bud32 domain probably displays kinase activity that regulates Kae1 function. In Methanosarcina barkeri (strain Fusaro / DSM 804), this protein is Probable bifunctional tRNA threonylcarbamoyladenosine biosynthesis protein.